We begin with the raw amino-acid sequence, 309 residues long: Serine/threonine-protein phosphatase CPPED1 (309 aa).

Residues Trp-47–Gly-250 form a catalytic region. Residues Asp-51, Asp-88, Asn-125, and His-244 each coordinate a divalent metal cation.

The protein belongs to the metallophosphoesterase superfamily. CPPED1 family. A divalent metal cation is required as a cofactor.

It is found in the cytoplasm. It catalyses the reaction O-phospho-L-seryl-[protein] + H2O = L-seryl-[protein] + phosphate. The enzyme catalyses O-phospho-L-threonyl-[protein] + H2O = L-threonyl-[protein] + phosphate. Functionally, protein phosphatase involved in the dephosphorylation of AKT kinase family. The sequence is that of Serine/threonine-protein phosphatase CPPED1 (cpped1) from Danio rerio (Zebrafish).